We begin with the raw amino-acid sequence, 617 residues long: Dihydroxy-acid dehydratase (617 aa).

Aspartate 81 contributes to the Mg(2+) binding site. Cysteine 122 provides a ligand contact to [2Fe-2S] cluster. Mg(2+)-binding residues include aspartate 123 and lysine 124. An N6-carboxylysine modification is found at lysine 124. Cysteine 195 is a [2Fe-2S] cluster binding site. Mg(2+) is bound at residue glutamate 491. The active-site Proton acceptor is the serine 517.

This sequence belongs to the IlvD/Edd family. In terms of assembly, homodimer. The cofactor is [2Fe-2S] cluster. Requires Mg(2+) as cofactor.

The catalysed reaction is (2R)-2,3-dihydroxy-3-methylbutanoate = 3-methyl-2-oxobutanoate + H2O. It carries out the reaction (2R,3R)-2,3-dihydroxy-3-methylpentanoate = (S)-3-methyl-2-oxopentanoate + H2O. Its pathway is amino-acid biosynthesis; L-isoleucine biosynthesis; L-isoleucine from 2-oxobutanoate: step 3/4. The protein operates within amino-acid biosynthesis; L-valine biosynthesis; L-valine from pyruvate: step 3/4. In terms of biological role, functions in the biosynthesis of branched-chain amino acids. Catalyzes the dehydration of (2R,3R)-2,3-dihydroxy-3-methylpentanoate (2,3-dihydroxy-3-methylvalerate) into 2-oxo-3-methylpentanoate (2-oxo-3-methylvalerate) and of (2R)-2,3-dihydroxy-3-methylbutanoate (2,3-dihydroxyisovalerate) into 2-oxo-3-methylbutanoate (2-oxoisovalerate), the penultimate precursor to L-isoleucine and L-valine, respectively. The protein is Dihydroxy-acid dehydratase of Rhodospirillum rubrum (strain ATCC 11170 / ATH 1.1.1 / DSM 467 / LMG 4362 / NCIMB 8255 / S1).